The sequence spans 796 residues: Probable phosphoketolase (796 aa).

The protein belongs to the XFP family. The cofactor is thiamine diphosphate.

In Synechococcus elongatus (strain ATCC 33912 / PCC 7942 / FACHB-805) (Anacystis nidulans R2), this protein is Probable phosphoketolase.